A 401-amino-acid polypeptide reads, in one-letter code: Phosrestin-1 (401 aa).

A Phosphoserine; by CaMK modification is found at serine 366.

It belongs to the arrestin family. In terms of processing, phosphorylated upon light exposure. In terms of tissue distribution, expressed in photoreceptor cells.

Its subcellular location is the cell projection. It is found in the rhabdomere. Its function is as follows. Regulates photoreceptor cell deactivation. Arr1 and Arr2 proteins are mediators of rhodopsin inactivation and are essential for the termination of the phototransduction cascade. Involved in regulating normal cycles of per nuclear accumulation in brain circadian neurons and thus is important for normal circadian behavior. In the dark, functions with Arr1 to promote the formation of cytosolic Bdbt foci, which are required for dco localization to photoreceptor nuclei where it phosphorylates and activates degradation of per. This is Phosrestin-1 (Arr2) from Drosophila melanogaster (Fruit fly).